The chain runs to 351 residues: Anthranilate phosphoribosyltransferase (351 aa).

5-phospho-alpha-D-ribose 1-diphosphate is bound by residues glycine 89, 92 to 93 (GD), threonine 97, 99 to 102 (NIST), 117 to 125 (KHGNRSASG), and serine 129. Glycine 89 is an anthranilate binding site. Serine 101 lines the Mg(2+) pocket. Asparagine 120 contributes to the anthranilate binding site. Arginine 175 contributes to the anthranilate binding site. The Mg(2+) site is built by aspartate 234 and glutamate 235.

It belongs to the anthranilate phosphoribosyltransferase family. In terms of assembly, homodimer. Mg(2+) is required as a cofactor.

It carries out the reaction N-(5-phospho-beta-D-ribosyl)anthranilate + diphosphate = 5-phospho-alpha-D-ribose 1-diphosphate + anthranilate. The protein operates within amino-acid biosynthesis; L-tryptophan biosynthesis; L-tryptophan from chorismate: step 2/5. Functionally, catalyzes the transfer of the phosphoribosyl group of 5-phosphorylribose-1-pyrophosphate (PRPP) to anthranilate to yield N-(5'-phosphoribosyl)-anthranilate (PRA). The polypeptide is Anthranilate phosphoribosyltransferase (Synechococcus sp. (strain CC9902)).